The following is a 354-amino-acid chain: NADH-ubiquinone oxidoreductase chain 1 (354 aa).

8 helical membrane passes run 43-63 (LFWS…LTLF), 108-128 (PALF…LWGC), 139-159 (FFWG…GVVL), 180-200 (VISY…VVGS), 211-231 (VSGC…FCVL), 264-284 (IFIA…VLFL), 298-318 (LISS…LIVL), and 334-354 (LIWC…LMII).

The protein belongs to the complex I subunit 1 family.

The protein resides in the mitochondrion inner membrane. The enzyme catalyses a ubiquinone + NADH + 5 H(+)(in) = a ubiquinol + NAD(+) + 4 H(+)(out). Its function is as follows. Core subunit of the mitochondrial membrane respiratory chain NADH dehydrogenase (Complex I) that is believed to belong to the minimal assembly required for catalysis. Complex I functions in the transfer of electrons from NADH to the respiratory chain. The immediate electron acceptor for the enzyme is believed to be ubiquinone. This chain is NADH-ubiquinone oxidoreductase chain 1 (ND1), found in Pecten maximus (King scallop).